A 433-amino-acid polypeptide reads, in one-letter code: Enolase (433 aa).

Residue Gln-167 coordinates (2R)-2-phosphoglycerate. Residue Glu-209 is the Proton donor of the active site. Mg(2+) contacts are provided by Asp-246, Glu-291, and Asp-318. The (2R)-2-phosphoglycerate site is built by Lys-343, Arg-372, Ser-373, and Lys-394. Lys-343 (proton acceptor) is an active-site residue.

Belongs to the enolase family. As to quaternary structure, component of the RNA degradosome, a multiprotein complex involved in RNA processing and mRNA degradation. The cofactor is Mg(2+).

Its subcellular location is the cytoplasm. The protein resides in the secreted. It localises to the cell surface. It catalyses the reaction (2R)-2-phosphoglycerate = phosphoenolpyruvate + H2O. It participates in carbohydrate degradation; glycolysis; pyruvate from D-glyceraldehyde 3-phosphate: step 4/5. In terms of biological role, catalyzes the reversible conversion of 2-phosphoglycerate (2-PG) into phosphoenolpyruvate (PEP). It is essential for the degradation of carbohydrates via glycolysis. This is Enolase from Actinobacillus succinogenes (strain ATCC 55618 / DSM 22257 / CCUG 43843 / 130Z).